A 365-amino-acid chain; its full sequence is Membrane-bound lytic murein transglycosylase C (365 aa).

An N-terminal signal peptide occupies residues M1–A19. A lipid anchor (N-palmitoyl cysteine) is attached at C20. C20 is lipidated: S-diacylglycerol cysteine.

Belongs to the transglycosylase Slt family.

It is found in the cell outer membrane. It carries out the reaction Exolytic cleavage of the (1-&gt;4)-beta-glycosidic linkage between N-acetylmuramic acid (MurNAc) and N-acetylglucosamine (GlcNAc) residues in peptidoglycan, from either the reducing or the non-reducing ends of the peptidoglycan chains, with concomitant formation of a 1,6-anhydrobond in the MurNAc residue.. Murein-degrading enzyme. May play a role in recycling of muropeptides during cell elongation and/or cell division. This is Membrane-bound lytic murein transglycosylase C from Actinobacillus pleuropneumoniae serotype 5b (strain L20).